Consider the following 243-residue polypeptide: Nuclear ubiquitous casein and cyclin-dependent kinase substrate 1 (243 aa).

Residues 1-243 (MSRPVRNRKV…SEDEAASGED (243 aa)) form a disordered region. Tyr-13 bears the Phosphotyrosine mark. Residues Ser-14 and Ser-19 each carry the phosphoserine modification. Position 26 is a phosphotyrosine (Tyr-26). A compositionally biased stretch (basic residues) spans 35-51 (KKIRSSPREAKNKRRSG). Ser-54, Ser-58, Ser-61, Ser-73, Ser-75, and Ser-79 each carry phosphoserine. Residues 64-77 (KDVKTKKDDSHSAE) show a composition bias toward basic and acidic residues. Residues 91–100 (QQRQAASKAA) are compositionally biased toward low complexity. Residues 111-124 (VGSEEEPEEDDEAP) show a composition bias toward acidic residues. 4 positions are modified to phosphoserine: Ser-113, Ser-130, Ser-132, and Ser-144. Acidic residues predominate over residues 132–145 (SDEDFLMEDDDDSD). Basic residues predominate over residues 149-174 (SKKKNKKMVKKSKPERKEKKMPKPRL). At Thr-179 the chain carries Phosphothreonine. Residue Ser-181 is modified to Phosphoserine. Positions 197-206 (TSKEKTPSPK) are enriched in basic and acidic residues. A Phosphothreonine modification is found at Thr-202. Ser-204, Ser-214, Ser-223, Ser-229, Ser-234, and Ser-240 each carry phosphoserine. Positions 232–243 (EGSEDEAASGED) are enriched in acidic residues.

As to quaternary structure, does not interact with RAD51. Post-translationally, phosphorylated in an ATM-dependent manner in response to DNA damage. Phosphorylated by CDK1 and casein kinase.

It localises to the nucleus. It is found in the chromosome. Its function is as follows. Chromatin-associated protein involved in DNA repair by promoting homologous recombination (HR). Binds double-stranded DNA (dsDNA) and secondary DNA structures, such as D-loop structures, but with less affinity than RAD51AP1. This Rattus norvegicus (Rat) protein is Nuclear ubiquitous casein and cyclin-dependent kinase substrate 1.